A 480-amino-acid polypeptide reads, in one-letter code: uncharacterized protein (480 aa).

This is an uncharacterized protein from Xylella fastidiosa (strain 9a5c).